The primary structure comprises 385 residues: MIQAPRIALIAGEASGDHLGAGLIQQLRLRLPTAEFVGIGGDMMRSARCQTWFDTSELAVMGLTEVLRHLPRLLKIRREFCKRALAWHPDVLIGIDAPDFNLTVERWFKQRHIRTVHYVSPSIWAWREKRAAKIGASVDRVLCLFPMEPPIYARYGIDARFVGHPMADEIPYQTDRATARTALGLPLLSPVLAVLPGSRHSEISQLGSTFLEAAGQLSEHLPGLHVVIPAANTQCKPLLAEQLSRSTLPVMHSHLLDNSARTAMLAADVVLVASGTATLEAMLLKRPMVVAYKVAPLTYRIVKTLKLLKINRFALPNILAGEDLAPELIQKDCTAPALCAALLDWFKHPQKVTALQNRYLQLHTQLRRNASTRAAEAITELLPQR.

It belongs to the LpxB family.

The enzyme catalyses a lipid X + a UDP-2-N,3-O-bis[(3R)-3-hydroxyacyl]-alpha-D-glucosamine = a lipid A disaccharide + UDP + H(+). Its pathway is bacterial outer membrane biogenesis; LPS lipid A biosynthesis. Its function is as follows. Condensation of UDP-2,3-diacylglucosamine and 2,3-diacylglucosamine-1-phosphate to form lipid A disaccharide, a precursor of lipid A, a phosphorylated glycolipid that anchors the lipopolysaccharide to the outer membrane of the cell. The sequence is that of Lipid-A-disaccharide synthase (lpxB) from Xylella fastidiosa (strain 9a5c).